The chain runs to 73 residues: Putative defensin-like protein 57 (73 aa).

Residues 1 to 25 (MRFTSMIFVLVVILINSLFNFNVLA) form the signal peptide. Cystine bridges form between Cys-37–Cys-71, Cys-41–Cys-64, Cys-50–Cys-69, and Cys-54–Cys-70.

It belongs to the DEFL family.

It is found in the secreted. The sequence is that of Putative defensin-like protein 57 from Arabidopsis thaliana (Mouse-ear cress).